Here is a 673-residue protein sequence, read N- to C-terminus: DNA ligase (673 aa).

NAD(+) is bound by residues 38-42, 87-88, and E119; these read DSVYD and SL. K121 functions as the N6-AMP-lysine intermediate in the catalytic mechanism. Residues R142, E179, K296, and K320 each contribute to the NAD(+) site. 4 residues coordinate Zn(2+): C414, C417, C432, and C438. A BRCT domain is found at 595–673; sequence VVKSEIAGKT…EEAFLKLLKS (79 aa).

It belongs to the NAD-dependent DNA ligase family. LigA subfamily. The cofactor is Mg(2+). Requires Mn(2+) as cofactor.

It carries out the reaction NAD(+) + (deoxyribonucleotide)n-3'-hydroxyl + 5'-phospho-(deoxyribonucleotide)m = (deoxyribonucleotide)n+m + AMP + beta-nicotinamide D-nucleotide.. Its function is as follows. DNA ligase that catalyzes the formation of phosphodiester linkages between 5'-phosphoryl and 3'-hydroxyl groups in double-stranded DNA using NAD as a coenzyme and as the energy source for the reaction. It is essential for DNA replication and repair of damaged DNA. The polypeptide is DNA ligase (Coxiella burnetii (strain CbuK_Q154) (Coxiella burnetii (strain Q154))).